A 594-amino-acid chain; its full sequence is Potassium-transporting ATPase potassium-binding subunit (594 aa).

A run of 10 helical transmembrane segments spans residues 3–23 (ADFL…APLL), 67–87 (AVAM…LQRL), 136–156 (ALTV…IALV), 179–199 (LYVL…QGVV), 287–307 (LEML…GEMV), 314–334 (VAIL…AAYF), 415–435 (GLYG…LMIG), 453–473 (VALV…VAVL), 519–539 (VLLG…ILAL), and 562–582 (LFVA…YVPA).

This sequence belongs to the KdpA family. As to quaternary structure, the system is composed of three essential subunits: KdpA, KdpB and KdpC.

It is found in the cell inner membrane. Its function is as follows. Part of the high-affinity ATP-driven potassium transport (or Kdp) system, which catalyzes the hydrolysis of ATP coupled with the electrogenic transport of potassium into the cytoplasm. This subunit binds the periplasmic potassium ions and delivers the ions to the membrane domain of KdpB through an intramembrane tunnel. This Bordetella pertussis (strain Tohama I / ATCC BAA-589 / NCTC 13251) protein is Potassium-transporting ATPase potassium-binding subunit.